The primary structure comprises 207 residues: Microtubule-associated protein Jupiter (207 aa).

S30 bears the Phosphoserine mark. Phosphothreonine is present on residues T41 and T102. 3 positions are modified to phosphoserine: S111, S138, and S149. Disordered regions lie at residues 129 to 174 and 188 to 207; these read KGKY…YKAG and GNQV…SGLW. Positions 136–149 are enriched in low complexity; sequence SGSVSSASSSVSSS. Residues 150–164 show a composition bias toward polar residues; the sequence is TENLKINVGNRSDGN.

The protein belongs to the MAP Jupiter family.

It localises to the nucleus. The protein resides in the cytoplasm. Its subcellular location is the cytoskeleton. The protein localises to the spindle. In terms of biological role, binds to all microtubule populations. This chain is Microtubule-associated protein Jupiter, found in Drosophila grimshawi (Hawaiian fruit fly).